Consider the following 332-residue polypeptide: Putative D-threonate 4-phosphate dehydrogenase (332 aa).

Substrate contacts are provided by histidine 140 and threonine 141. Residues histidine 170, histidine 214, and histidine 270 each contribute to the a divalent metal cation site. 3 residues coordinate substrate: lysine 278, asparagine 287, and arginine 296.

It belongs to the PdxA family. PdxA2 subfamily. Homodimer. Requires a divalent metal cation as cofactor.

It catalyses the reaction 4-O-phospho-D-threonate + NAD(+) = dihydroxyacetone phosphate + CO2 + NADH. Catalyzes the NAD-dependent oxidation and subsequent decarboxylation of D-threonate 4-phosphate to produce dihydroxyacetone phosphate (DHAP). The protein is Putative D-threonate 4-phosphate dehydrogenase of Oceanobacillus iheyensis (strain DSM 14371 / CIP 107618 / JCM 11309 / KCTC 3954 / HTE831).